A 271-amino-acid chain; its full sequence is uncharacterized protein (271 aa).

Solcar repeat units follow at residues 3 to 74 (VQTL…AKRR), 81 to 163 (EGAI…SKKY), and 171 to 268 (DISV…FKSK). The next 6 membrane-spanning stretches (helical) occupy residues 5–26 (TLMA…IDTI), 49–69 (GLPI…STYV), 84–104 (ILYS…WTPL), 138–158 (GYWM…VCYE), 170–190 (WDIS…ATTI), and 240–261 (FTRG…SMSV).

Belongs to the mitochondrial carrier (TC 2.A.29) family.

The protein localises to the mitochondrion inner membrane. This is an uncharacterized protein from Schizosaccharomyces pombe (strain 972 / ATCC 24843) (Fission yeast).